A 129-amino-acid polypeptide reads, in one-letter code: Protein Turandot B2 (129 aa).

Positions 1–21 (MNSATSLMCFALLLISPLCMG) are cleaved as a signal peptide.

It belongs to the Turandot family.

It localises to the secreted. A humoral factor that may play a role in stress tolerance. The chain is Protein Turandot B2 (TotB2) from Drosophila erecta (Fruit fly).